The chain runs to 575 residues: MNILELSEQEIIRRNSLNELRAMGIEPYPAAEYVTNAFSTDIKAEFKDDETPRQVSVAGRMMSRRIMGKASFIELQDSKGRIQVYITRDDICPGEDKEMYNTVFKRLLDLGDFIGIEGFVFRTQMGEISIHAQKLTVLAKSIKPLPIVKYKDGVTYDSFEDPELRYRQRYVDLAVNEGVKDIFIKRSKVYSSMREYFNSKGYMEVETPILQAIAGGAAARPFMTHHNALDIPLYMRIASELYLKRLIVGGFEGVYEIGKNFRNEGMDRTHNPEFTCMEIYVAYKDYNWMMEFTEKMIEKICLDVNGTTEVKVGDNIINFKAPYKRVTMLGAIKEHTGYDLTGMNEEQIREVCKKLNMEIDDTMGKGKLIDEIFGEFCEGTYIQPTFITDYPIEMSPLTKKHRDNPELTERFELMVNGKELCNAYSELNDPIDQLERFEDQMKLSEKGDDEAMIIDKDFVRALEYGMPPTSGMGIGMDRLTMLMTGQSTIQEVLFFPQMRPEKVVPKDSASKFMELGITEEWVPVIQKAGYNQVADMKEVNPQKFHQDICGINKKYKLELTNPSVNDVAEWIQKIK.

Residues Glu412 and Glu419 each coordinate Mg(2+).

This sequence belongs to the class-II aminoacyl-tRNA synthetase family. In terms of assembly, homodimer. It depends on Mg(2+) as a cofactor.

It localises to the cytoplasm. It carries out the reaction tRNA(Lys) + L-lysine + ATP = L-lysyl-tRNA(Lys) + AMP + diphosphate. This chain is Lysine--tRNA ligase, found in Bacteroides fragilis (strain YCH46).